We begin with the raw amino-acid sequence, 446 residues long: Probable glycine dehydrogenase (decarboxylating) subunit 1 (446 aa).

Belongs to the GcvP family. N-terminal subunit subfamily. In terms of assembly, the glycine cleavage system is composed of four proteins: P, T, L and H. In this organism, the P 'protein' is a heterodimer of two subunits.

It catalyses the reaction N(6)-[(R)-lipoyl]-L-lysyl-[glycine-cleavage complex H protein] + glycine + H(+) = N(6)-[(R)-S(8)-aminomethyldihydrolipoyl]-L-lysyl-[glycine-cleavage complex H protein] + CO2. In terms of biological role, the glycine cleavage system catalyzes the degradation of glycine. The P protein binds the alpha-amino group of glycine through its pyridoxal phosphate cofactor; CO(2) is released and the remaining methylamine moiety is then transferred to the lipoamide cofactor of the H protein. The sequence is that of Probable glycine dehydrogenase (decarboxylating) subunit 1 from Xanthobacter autotrophicus (strain ATCC BAA-1158 / Py2).